The chain runs to 220 residues: Ribonuclease HII (220 aa).

The RNase H type-2 domain maps to 32–220 (KHIAGIDEAG…FAPIKGCFDC (189 aa)). Residues Asp38, Glu39, and Asp130 each coordinate a divalent metal cation.

The protein belongs to the RNase HII family. Mn(2+) serves as cofactor. Requires Mg(2+) as cofactor.

The protein resides in the cytoplasm. It catalyses the reaction Endonucleolytic cleavage to 5'-phosphomonoester.. Endonuclease that specifically degrades the RNA of RNA-DNA hybrids. The chain is Ribonuclease HII from Brucella abortus (strain 2308).